The following is a 363-amino-acid chain: Thioredoxin domain-containing protein C13F5.05, mitochondrial (363 aa).

Residues 1–24 (MLFRIPTLFTLFLACFSLVSGVFG) constitute a mitochondrion transit peptide. Positions 32-141 (NTIELNSKNF…KSLQKFVSDS (110 aa)) constitute a Thioredoxin domain.

The protein localises to the mitochondrion. The chain is Thioredoxin domain-containing protein C13F5.05, mitochondrial from Schizosaccharomyces pombe (strain 972 / ATCC 24843) (Fission yeast).